The primary structure comprises 125 residues: Multifunctional methyltransferase subunit TRM112-like protein (125 aa).

The TRM112 domain occupies 2-119 (RLLTHNLLSS…SRGIPNMLLS (118 aa)). The residue at position 119 (Ser-119) is a Phosphoserine.

The protein belongs to the TRM112 family. As to quaternary structure, part of the heterodimeric BUD23-TRM112 methyltransferase complex; this heterodimerization is necessary for the metabolic stability and activity of the catalytic subunit BUD23. Part of the heterodimeric N6AMT1-TRM112 methyltransferase complex; this heterodimerization is necessary for S-adenosyl-L-methionine-binding to N6AMT1/HEMK2. Part of the heterodimeric ALKBH8-TRM112 methyltransferase complex. Part of the heterodimeric METTL5-TRM112 methyltransferase complex; this heterodimerization is necessary for the stability of the catalytic subunit METTL5. Part of the heterodimeric THUMPD3-TRM112 methyltransferase complex; this complex forms an active tRNA methyltransferase, where TRMT112 acts as an activator of the catalytic subunit THUMPD3. Part of the heterodimeric THUMPD2-TRM112 methyltransferase complex; this complex forms an active tRNA methyltransferase, where TRMT112 acts as an activator of the catalytic subunit THUMPD2. Part of the heterodimeric TRMT11-TRM112 methyltransferase complex; this complex forms an active tRNA methyltransferase, where TRMT112 acts as an activator of the catalytic subunit TRMT11.

The protein resides in the nucleus. It is found in the nucleoplasm. The protein localises to the cytoplasm. It localises to the perinuclear region. In terms of biological role, acts as an activator of both rRNA/tRNA and protein methyltransferases. Together with methyltransferase BUD23, methylates the N(7) position of a guanine in 18S rRNA. The heterodimer with HEMK2/N6AMT1 catalyzes N5-methylation of ETF1 on 'Gln-185', using S-adenosyl L-methionine as methyl donor. The heterodimer with ALKBH8 catalyzes the methylation of 5-carboxymethyl uridine to 5-methylcarboxymethyl uridine at the wobble position of the anticodon loop in target tRNA species. Together with methyltransferase THUMPD3, catalyzes the formation of N(2)-methylguanosine at position 6 in a broad range of tRNA substrates and at position 7 of tRNA(Trp). Involved in the pre-rRNA processing steps leading to small-subunit rRNA production. Together with methyltransferase METTL5, specifically methylates the 6th position of adenine in position 1832 of 18S rRNA. The sequence is that of Multifunctional methyltransferase subunit TRM112-like protein (TRMT112) from Bos taurus (Bovine).